A 294-amino-acid chain; its full sequence is Cytidine deaminase (294 aa).

2 CMP/dCMP-type deaminase domains span residues Asp48–Lys168 and Val186–Gly294. Asn89 to Glu91 lines the substrate pocket. His102 is a Zn(2+) binding site. Residue Glu104 is the Proton donor of the active site. Residues Cys129 and Cys132 each coordinate Zn(2+).

The protein belongs to the cytidine and deoxycytidylate deaminase family. As to quaternary structure, homodimer. The cofactor is Zn(2+).

The catalysed reaction is cytidine + H2O + H(+) = uridine + NH4(+). It catalyses the reaction 2'-deoxycytidine + H2O + H(+) = 2'-deoxyuridine + NH4(+). Its function is as follows. This enzyme scavenges exogenous and endogenous cytidine and 2'-deoxycytidine for UMP synthesis. The protein is Cytidine deaminase of Klebsiella pneumoniae subsp. pneumoniae (strain ATCC 700721 / MGH 78578).